A 363-amino-acid chain; its full sequence is 3-dehydroquinate synthase (363 aa).

NAD(+) is bound by residues 109–113 (GATTD), 133–134 (TT), lysine 146, and lysine 155. Residues glutamate 188, histidine 251, and histidine 267 each contribute to the Zn(2+) site.

The protein belongs to the sugar phosphate cyclases superfamily. Dehydroquinate synthase family. NAD(+) is required as a cofactor. The cofactor is Co(2+). Requires Zn(2+) as cofactor.

The protein resides in the cytoplasm. It catalyses the reaction 7-phospho-2-dehydro-3-deoxy-D-arabino-heptonate = 3-dehydroquinate + phosphate. It participates in metabolic intermediate biosynthesis; chorismate biosynthesis; chorismate from D-erythrose 4-phosphate and phosphoenolpyruvate: step 2/7. Catalyzes the conversion of 3-deoxy-D-arabino-heptulosonate 7-phosphate (DAHP) to dehydroquinate (DHQ). In Streptomyces avermitilis (strain ATCC 31267 / DSM 46492 / JCM 5070 / NBRC 14893 / NCIMB 12804 / NRRL 8165 / MA-4680), this protein is 3-dehydroquinate synthase.